We begin with the raw amino-acid sequence, 83 residues long: Putative defensin-like protein 110 (83 aa).

The first 24 residues, 1–24 (MAITKKNLIAFVFTILFVISYVHC), serve as a signal peptide directing secretion. Disulfide bonds link C43–C81, C49–C73, C59–C79, and C63–C80.

This sequence belongs to the DEFL family.

The protein resides in the secreted. This is Putative defensin-like protein 110 from Arabidopsis thaliana (Mouse-ear cress).